The following is a 173-amino-acid chain: MTTQTSAATGSPTQQNNAALADMDSMDRQLLDIIQTGFPLSPRPYAELGQRLGLDEQEVLDRVRGLKARKIIRRLGANFQSAKLGFVSTLCAAKVPQDKMDAFVAEVNAKPGVTHNYLREHDYNIWFTLISPSREETQAILDGITQATGVPILNLPATKLFKIRVDFRMDNDS.

Substrate-binding residues include His115 and Arg119.

The protein belongs to the Ahb/Nir family. Forms a heterodimer composed of AhbA and AhbB.

It carries out the reaction siroheme + 2 H(+) = 12,18-didecarboxysiroheme + 2 CO2. It participates in porphyrin-containing compound metabolism; protoheme biosynthesis. Involved in siroheme-dependent heme b biosynthesis. Catalyzes the decarboxylation of siroheme into didecarboxysiroheme. Siroheme is decarboxylated to monodecarboxysiroheme, which is in turn decarboxylated to didecarboxysiroheme. This is Siroheme decarboxylase alpha subunit from Desulfovibrio desulfuricans (strain ATCC 27774 / DSM 6949 / MB).